Consider the following 201-residue polypeptide: Pyridoxine/pyridoxamine 5'-phosphate oxidase (201 aa).

Residues 45–50, 65–66, Arg-71, Lys-72, and Gln-94 contribute to the FMN site; these read RMVLLK and YT. Position 50 (Lys-50) interacts with substrate. The substrate site is built by Tyr-112, Arg-116, and Ser-120. FMN contacts are provided by residues 129–130 and Trp-174; that span reads QS. 180–182 is a binding site for substrate; that stretch reads RLH. Arg-184 contacts FMN.

This sequence belongs to the pyridoxamine 5'-phosphate oxidase family. In terms of assembly, homodimer. It depends on FMN as a cofactor.

It carries out the reaction pyridoxamine 5'-phosphate + O2 + H2O = pyridoxal 5'-phosphate + H2O2 + NH4(+). The catalysed reaction is pyridoxine 5'-phosphate + O2 = pyridoxal 5'-phosphate + H2O2. The protein operates within cofactor metabolism; pyridoxal 5'-phosphate salvage; pyridoxal 5'-phosphate from pyridoxamine 5'-phosphate: step 1/1. Its pathway is cofactor metabolism; pyridoxal 5'-phosphate salvage; pyridoxal 5'-phosphate from pyridoxine 5'-phosphate: step 1/1. Functionally, catalyzes the oxidation of either pyridoxine 5'-phosphate (PNP) or pyridoxamine 5'-phosphate (PMP) into pyridoxal 5'-phosphate (PLP). This chain is Pyridoxine/pyridoxamine 5'-phosphate oxidase, found in Rhodospirillum rubrum (strain ATCC 11170 / ATH 1.1.1 / DSM 467 / LMG 4362 / NCIMB 8255 / S1).